We begin with the raw amino-acid sequence, 268 residues long: NH(3)-dependent NAD(+) synthetase (268 aa).

45 to 52 (GLSGGIDS) provides a ligand contact to ATP. Asp51 contributes to the Mg(2+) binding site. Residue Arg129 coordinates deamido-NAD(+). Thr149 is an ATP binding site. Glu154 is a binding site for Mg(2+). Lys162 and Asp169 together coordinate deamido-NAD(+). ATP-binding residues include Lys178 and Thr200. 260-261 (HK) contributes to the deamido-NAD(+) binding site.

This sequence belongs to the NAD synthetase family. Homodimer.

It carries out the reaction deamido-NAD(+) + NH4(+) + ATP = AMP + diphosphate + NAD(+) + H(+). The protein operates within cofactor biosynthesis; NAD(+) biosynthesis; NAD(+) from deamido-NAD(+) (ammonia route): step 1/1. Functionally, catalyzes the ATP-dependent amidation of deamido-NAD to form NAD. Uses ammonia as a nitrogen source. The sequence is that of NH(3)-dependent NAD(+) synthetase from Halobacterium salinarum (strain ATCC 29341 / DSM 671 / R1).